Here is a 509-residue protein sequence, read N- to C-terminus: Photosystem II CP47 reaction center protein (509 aa).

Transmembrane regions (helical) follow at residues 21–36 (SVHI…WAGS), 101–115 (IVFS…IWHW), 140–156 (GIHL…FGAF), 203–218 (IAAG…FHLS), 237–252 (VLSS…AFVV), and 457–472 (SFAL…HGAR).

It belongs to the PsbB/PsbC family. PsbB subfamily. PSII is composed of 1 copy each of membrane proteins PsbA, PsbB, PsbC, PsbD, PsbE, PsbF, PsbH, PsbI, PsbJ, PsbK, PsbL, PsbM, PsbT, PsbX, PsbY, PsbZ, Psb30/Ycf12, at least 3 peripheral proteins of the oxygen-evolving complex and a large number of cofactors. It forms dimeric complexes. Requires Binds multiple chlorophylls. PSII binds additional chlorophylls, carotenoids and specific lipids. as cofactor.

The protein localises to the plastid. It localises to the chloroplast thylakoid membrane. Functionally, one of the components of the core complex of photosystem II (PSII). It binds chlorophyll and helps catalyze the primary light-induced photochemical processes of PSII. PSII is a light-driven water:plastoquinone oxidoreductase, using light energy to abstract electrons from H(2)O, generating O(2) and a proton gradient subsequently used for ATP formation. This Cicer arietinum (Chickpea) protein is Photosystem II CP47 reaction center protein.